Consider the following 331-residue polypeptide: UDP-N-acetylenolpyruvoylglucosamine reductase (331 aa).

In terms of domain architecture, FAD-binding PCMH-type spans 54-221; sequence RVGGAAELYV…TQATFQLQPG (168 aa). The active site involves arginine 200. Serine 251 serves as the catalytic Proton donor. Residue glutamate 321 is part of the active site.

This sequence belongs to the MurB family. FAD serves as cofactor.

Its subcellular location is the cytoplasm. It catalyses the reaction UDP-N-acetyl-alpha-D-muramate + NADP(+) = UDP-N-acetyl-3-O-(1-carboxyvinyl)-alpha-D-glucosamine + NADPH + H(+). It functions in the pathway cell wall biogenesis; peptidoglycan biosynthesis. Its function is as follows. Cell wall formation. This is UDP-N-acetylenolpyruvoylglucosamine reductase from Trichormus variabilis (strain ATCC 29413 / PCC 7937) (Anabaena variabilis).